We begin with the raw amino-acid sequence, 159 residues long: Serine-protein kinase RsbW (159 aa).

It belongs to the anti-sigma-factor family.

The enzyme catalyses L-seryl-[protein] + ATP = O-phospho-L-seryl-[protein] + ADP + H(+). It carries out the reaction L-threonyl-[protein] + ATP = O-phospho-L-threonyl-[protein] + ADP + H(+). Functionally, negative regulator of sigma-B activity. Phosphorylates and inactivates its specific antagonist protein, RsbV. Upon phosphorylation of RsbV, RsbW is released and binds to sigma-B, thereby blocking its ability to form an RNA polymerase holoenzyme (E-sigma-B). The protein is Serine-protein kinase RsbW of Staphylococcus aureus (strain MRSA252).